Reading from the N-terminus, the 188-residue chain is Ion-translocating oxidoreductase complex subunit B (188 aa).

The tract at residues 1 to 26 (MNGVFLAIGALLPICLAGGALLGYAA) is hydrophobic. One can recognise a 4Fe-4S domain in the interval 32 to 90 (QGDPVAEQVNALLPQTQCGQCGYPGCKPYAEAIAAGDKINKCPPGGEATIRALADLLDL). C49, C52, C57, C73, C113, C116, C119, C123, C143, C146, C149, and C153 together coordinate [4Fe-4S] cluster. 4Fe-4S ferredoxin-type domains lie at 104–133 (RVAY…GAAR) and 134–163 (LMHT…MRET).

Belongs to the 4Fe4S bacterial-type ferredoxin family. RnfB subfamily. The complex is composed of six subunits: RnfA, RnfB, RnfC, RnfD, RnfE and RnfG. It depends on [4Fe-4S] cluster as a cofactor.

It is found in the cell inner membrane. Part of a membrane-bound complex that couples electron transfer with translocation of ions across the membrane. The protein is Ion-translocating oxidoreductase complex subunit B of Pseudomonas aeruginosa (strain UCBPP-PA14).